Consider the following 340-residue polypeptide: UDP-3-O-(3-hydroxymyristoyl)glucosamine N-acyltransferase (340 aa).

H239 acts as the Proton acceptor in catalysis.

It belongs to the transferase hexapeptide repeat family. LpxD subfamily. In terms of assembly, homotrimer.

The catalysed reaction is a UDP-3-O-[(3R)-3-hydroxyacyl]-alpha-D-glucosamine + a (3R)-hydroxyacyl-[ACP] = a UDP-2-N,3-O-bis[(3R)-3-hydroxyacyl]-alpha-D-glucosamine + holo-[ACP] + H(+). It carries out the reaction UDP-3-O-[(3R)-3-hydroxytetradecanoyl]-alpha-D-glucosamine + (3R)-hydroxytetradecanoyl-[ACP] = UDP-2-N,3-O-bis[(3R)-3-hydroxytetradecanoyl]-alpha-D-glucosamine + holo-[ACP] + H(+). Its pathway is glycolipid biosynthesis; lipid IV(A) biosynthesis; lipid IV(A) from (3R)-3-hydroxytetradecanoyl-[acyl-carrier-protein] and UDP-N-acetyl-alpha-D-glucosamine: step 3/6. In terms of biological role, catalyzes the N-acylation of UDP-3-O-(hydroxytetradecanoyl)glucosamine using 3-hydroxytetradecanoyl-ACP as the acyl donor. Is involved in the biosynthesis of lipid A, a phosphorylated glycolipid that anchors the lipopolysaccharide to the outer membrane of the cell. The sequence is that of UDP-3-O-(3-hydroxymyristoyl)glucosamine N-acyltransferase from Pectobacterium atrosepticum (strain SCRI 1043 / ATCC BAA-672) (Erwinia carotovora subsp. atroseptica).